Here is a 121-residue protein sequence, read N- to C-terminus: Cell division protein FtsL (121 aa).

Topologically, residues 1-34 (MISRVTEALSKVKGSIGSNERHALPGVIGDDLLR) are cytoplasmic. The chain crosses the membrane as a helical span at residues 35–57 (FGKLPLCLFICIILTAVTVVTTA). Topologically, residues 58–121 (HHTRLLTAQR…PSQENIVVQK (64 aa)) are periplasmic.

Belongs to the FtsL family. Part of a complex composed of FtsB, FtsL and FtsQ.

It is found in the cell inner membrane. Functionally, essential cell division protein. May link together the upstream cell division proteins, which are predominantly cytoplasmic, with the downstream cell division proteins, which are predominantly periplasmic. The chain is Cell division protein FtsL from Salmonella typhimurium (strain LT2 / SGSC1412 / ATCC 700720).